Here is an 86-residue protein sequence, read N- to C-terminus: Small ribosomal subunit protein uS17 (86 aa).

It belongs to the universal ribosomal protein uS17 family. As to quaternary structure, part of the 30S ribosomal subunit.

In terms of biological role, one of the primary rRNA binding proteins, it binds specifically to the 5'-end of 16S ribosomal RNA. The protein is Small ribosomal subunit protein uS17 of Lactococcus lactis subsp. cremoris (strain MG1363).